Here is a 359-residue protein sequence, read N- to C-terminus: 4-hydroxy-2-oxovalerate aldolase 1 (359 aa).

The region spanning 23–275 is the Pyruvate carboxyltransferase domain; the sequence is VRVTDTSLRD…KTGIDFFDIA (253 aa). 31-32 contributes to the substrate binding site; sequence RD. Asp-32 is a binding site for Mn(2+). His-35 (proton acceptor) is an active-site residue. Positions 185 and 214 each coordinate substrate. His-214 and His-216 together coordinate Mn(2+). Residue Tyr-305 participates in substrate binding.

Belongs to the 4-hydroxy-2-oxovalerate aldolase family.

The catalysed reaction is (S)-4-hydroxy-2-oxopentanoate = acetaldehyde + pyruvate. This is 4-hydroxy-2-oxovalerate aldolase 1 from Mycobacteroides abscessus (strain ATCC 19977 / DSM 44196 / CCUG 20993 / CIP 104536 / JCM 13569 / NCTC 13031 / TMC 1543 / L948) (Mycobacterium abscessus).